Here is a 297-residue protein sequence, read N- to C-terminus: Translational activator of cytochrome c oxidase 1 (297 aa).

Residues 20 to 45 form a disordered region; that stretch reads RGPGVRAAPPRDPRPSHPEPRGCGAA. Basic and acidic residues predominate over residues 28–39; it reads PPRDPRPSHPEP. Residues 191 to 227 adopt a coiled-coil conformation; it reads VEVEDREKKAVNLERALEMAIEAGAEDVKETEDEEER.

This sequence belongs to the TACO1 family.

It is found in the mitochondrion. In terms of biological role, acts as a translational activator of mitochondrially-encoded cytochrome c oxidase 1. This is Translational activator of cytochrome c oxidase 1 (TACO1) from Homo sapiens (Human).